A 697-amino-acid polypeptide reads, in one-letter code: MPRQFSLENTRNIGIMAHIDAGKTTTTERILFYTGRVHKIGETHEGSATMDWMEQEQERGITITSAATTAQWKGTRINIIDTPGHVDFTVEVERSLRVLDGAVAVFCAKGGVEPQSETVWRQADKYKVPRMAYVNKMDIMGADFFNCIKMMKERLQANPVPIQLPIGKEDNFQGIIDLIEMKAYYYMDDLGKVIEQRDIPEDMRELAEEYRTNLLENVAEYDEELMMKYLEGEEITEAEIKAALRKGTIAVKAIPVLCGSSYKNKGVQRLLDAIVDYMPSPVDIEAIKGVSVDGETEIERHASDDEPFSALAFKIMSDPYVGKLCFFRVYSGKLSSGSYVLNATKGKRERIGRLLMMHANHREEVDMVYAGDIAAAVGLKETTTGDTLCDEANPVILESMNFPEPVIHVAIEPKTKAGQEKMALALQKLAEEDPTFRTYTDQETGQTIIAGMGELHLEIIVDRLLREFKVEANVGNPQVAYKETIRKSVKSEGKYIRQSGGKGQYGHCWIEIEPKERGTGYEFVNKIVGGVIPKEYIPAVDAGIQSAMNNGVLAGYPVVDVKVTLYDGSYHEVDSSEMAFKVAASMAFKEGMKKADPVILEPIMKVVVTVPEDYMGDVIGDLNSRRGRIEGMEARAGAQVIHAYVPLAEMFGYATALRSRSQGRGVFSMEISHFEEVPKNIQEQIISGRAKNNSSDE.

Positions 8–282 (ENTRNIGIMA…AIVDYMPSPV (275 aa)) constitute a tr-type G domain. GTP contacts are provided by residues 17–24 (AHIDAGKT), 81–85 (DTPGH), and 135–138 (NKMD).

This sequence belongs to the TRAFAC class translation factor GTPase superfamily. Classic translation factor GTPase family. EF-G/EF-2 subfamily.

The protein localises to the cytoplasm. In terms of biological role, catalyzes the GTP-dependent ribosomal translocation step during translation elongation. During this step, the ribosome changes from the pre-translocational (PRE) to the post-translocational (POST) state as the newly formed A-site-bound peptidyl-tRNA and P-site-bound deacylated tRNA move to the P and E sites, respectively. Catalyzes the coordinated movement of the two tRNA molecules, the mRNA and conformational changes in the ribosome. The sequence is that of Elongation factor G from Acetivibrio thermocellus (strain ATCC 27405 / DSM 1237 / JCM 9322 / NBRC 103400 / NCIMB 10682 / NRRL B-4536 / VPI 7372) (Clostridium thermocellum).